Reading from the N-terminus, the 2527-residue chain is Leucine-rich repeat serine/threonine-protein kinase 2 (2527 aa).

A required for RAB29-mediated activation region spans residues 1–969; the sequence is MASGSCQGCE…RSSKLQSHMR (969 aa). A coiled-coil region spans residues 319–348; sequence LTETIFLNQDLEEKNENQENDDEGEEDKLF. Ser-910, Ser-935, Ser-955, and Ser-973 each carry phosphoserine. 13 LRR repeats span residues 983–1004, 1012–1033, 1036–1057, 1059–1080, 1084–1105, 1108–1129, 1130–1150, 1156–1171, 1174–1196, 1197–1218, 1221–1245, 1246–1267, and 1269–1291; these read YITS…SQKC, HLEK…LCET, SLTH…LLKM, CIAN…DPTV, TLKQ…LTDV, KLEQ…LRLK, ELKI…NFLE, ESFS…MPFL, SMTI…LNLP, HLRS…AHWK, NLRE…YLWS, RVEK…IGCL, and NLTS…MGKL. Ser-1292 carries the phosphoserine; by autocatalysis modification. The Roc domain maps to 1328-1511; the sequence is KAVPYNRMKL…KTIINESLNF (184 aa). A GTP-binding site is contributed by 1341–1348; that stretch reads GNTGSGKT. A Phosphoserine modification is found at Ser-1444. In terms of domain architecture, COR spans 1546–1740; that stretch reads PVIDRKRLLQ…RMYWRQGIYL (195 aa). Residues 1879–2138 form the Protein kinase domain; that stretch reads QAPEFLLGDG…FDILNSAELV (260 aa). ATP is bound by residues Leu-1885, Asp-1887, Gly-1888, Gly-1891, Val-1893, Ala-1904, Lys-1906, Met-1947, Glu-1948, Ala-1950, Ser-1954, and Arg-1957. The active-site Proton acceptor is Asp-1994. Residues His-1998, Leu-2001, Ala-2016, and Asp-2017 each coordinate ATP. 2098-2121 contributes to the GTP binding site; the sequence is EYGCAPWPMVEKLIKQCLKENPQE. WD repeat units follow at residues 2139–2183, 2188–2228, 2233–2276, 2281–2327, 2333–2377, 2402–2438, and 2443–2497; these read CLTR…SFLD, GYTS…LVIN, KKRH…AIFE, KLKG…FSFS, QKLI…EVWD, KESK…LLLD, and RLIR…TVWD. A GTP-binding site is contributed by 2295–2298; that stretch reads NVST.

The protein belongs to the protein kinase superfamily. TKL Ser/Thr protein kinase family. As to quaternary structure, homodimer. Homotetramer; when activated by GTP-bound RAB29. Interacts with PRKN, PRDX3, and TPCN2. Interacts with VPS35. Interacts (via N-terminus) with RAB29; this interaction is direct and stimulates kinase activity. Interacts (via ROC domain) with SEC16A. Interacts with APP; interaction promotes phosphorylation of 'Thr-743' of APP. Interacts with MAPT. Interacts with RAB8A, RAB10, and RAB12. Interacts (via N-terminus) with RAB32. Interacts with YWHAG; this interaction is dependent on phosphorylation of Ser-910 and either Ser-935 or Ser-1444. Interacts with SFN; this interaction is dependent on phosphorylation of Ser-910 and/or Ser-935. The cofactor is Mg(2+). In terms of processing, autophosphorylated at Ser-1292; autophosphorylation is stimulated by RAB29. Phosphorylation of Ser-910 and either Ser-935 or Ser-1444 facilitates interaction with YWHAG. Phosphorylation of Ser-910 and/or Ser-935 facilitates interaction with SFN. Post-translationally, ubiquitinated by TRIM1; undergoes 'Lys-48'-linked polyubiquitination leading to proteasomal degradation. In terms of tissue distribution, expressed in pyramidal neurons in all cortical laminae of the visual cortex, in neurons of the substantia nigra pars compacta and caudate putamen (at protein level). Expressed in neutrophils (at protein level). Expressed in the brain. Expressed throughout the adult brain, but at a lower level than in heart and liver. Also expressed in placenta, lung, skeletal muscle, kidney and pancreas. In the brain, expressed in the cerebellum, cerebral cortex, medulla, spinal cord occipital pole, frontal lobe, temporal lobe and putamen. Expression is particularly high in brain dopaminoceptive areas.

It is found in the cytoplasmic vesicle. It localises to the perikaryon. The protein localises to the golgi apparatus membrane. The protein resides in the cell projection. Its subcellular location is the axon. It is found in the dendrite. It localises to the endoplasmic reticulum membrane. The protein localises to the secretory vesicle. The protein resides in the synaptic vesicle membrane. Its subcellular location is the endosome. It is found in the lysosome. It localises to the mitochondrion outer membrane. The protein localises to the cytoplasm. The protein resides in the cytoskeleton. Its subcellular location is the phagosome. It carries out the reaction L-threonyl-[protein] + ATP = O-phospho-L-threonyl-[protein] + ADP + H(+). It catalyses the reaction L-seryl-[protein] + ATP = O-phospho-L-seryl-[protein] + ADP + H(+). The enzyme catalyses GTP + H2O = GDP + phosphate + H(+). Kinase activity is regulated by the GTPase activity of the ROC domain. GTP-bound LRRK2 kinase activity is stimulated by RAB29. Phosphorylation of RAB10 'Thr-73' is stimulated by RAB29 and RAB32. Inhibited by small molecule inhibitor MLi-2. Functionally, serine/threonine-protein kinase which phosphorylates a broad range of proteins involved in multiple processes such as neuronal plasticity, innate immunity, autophagy, and vesicle trafficking. Is a key regulator of RAB GTPases by regulating the GTP/GDP exchange and interaction partners of RABs through phosphorylation. Phosphorylates RAB3A, RAB3B, RAB3C, RAB3D, RAB5A, RAB5B, RAB5C, RAB8A, RAB8B, RAB10, RAB12, RAB29, RAB35, and RAB43. Regulates the RAB3IP-catalyzed GDP/GTP exchange for RAB8A through the phosphorylation of 'Thr-72' on RAB8A. Inhibits the interaction between RAB8A and GDI1 and/or GDI2 by phosphorylating 'Thr-72' on RAB8A. Regulates primary ciliogenesis through phosphorylation of RAB8A and RAB10, which promotes SHH signaling in the brain. Together with RAB29, plays a role in the retrograde trafficking pathway for recycling proteins, such as mannose-6-phosphate receptor (M6PR), between lysosomes and the Golgi apparatus in a retromer-dependent manner. Regulates neuronal process morphology in the intact central nervous system (CNS). Plays a role in synaptic vesicle trafficking. Plays an important role in recruiting SEC16A to endoplasmic reticulum exit sites (ERES) and in regulating ER to Golgi vesicle-mediated transport and ERES organization. Positively regulates autophagy through a calcium-dependent activation of the CaMKK/AMPK signaling pathway. The process involves activation of nicotinic acid adenine dinucleotide phosphate (NAADP) receptors, increase in lysosomal pH, and calcium release from lysosomes. Phosphorylates PRDX3. By phosphorylating APP on 'Thr-743', which promotes the production and the nuclear translocation of the APP intracellular domain (AICD), regulates dopaminergic neuron apoptosis. Acts as a positive regulator of innate immunity by mediating phosphorylation of RIPK2 downstream of NOD1 and NOD2, thereby enhancing RIPK2 activation. Independent of its kinase activity, inhibits the proteasomal degradation of MAPT, thus promoting MAPT oligomerization and secretion. In addition, has GTPase activity via its Roc domain which regulates LRRK2 kinase activity. Recruited by RAB29/RAB7L1 to overloaded lysosomes where it phosphorylates and stabilizes RAB8A and RAB10 which promote lysosomal content release and suppress lysosomal enlargement through the EHBP1 and EHBP1L1 effector proteins. The sequence is that of Leucine-rich repeat serine/threonine-protein kinase 2 (LRRK2) from Homo sapiens (Human).